A 300-amino-acid polypeptide reads, in one-letter code: Porphobilinogen deaminase (300 aa).

Residue Cys-241 is modified to S-(dipyrrolylmethanemethyl)cysteine.

It belongs to the HMBS family. As to quaternary structure, monomer. It depends on dipyrromethane as a cofactor.

It carries out the reaction 4 porphobilinogen + H2O = hydroxymethylbilane + 4 NH4(+). It participates in porphyrin-containing compound metabolism; protoporphyrin-IX biosynthesis; coproporphyrinogen-III from 5-aminolevulinate: step 2/4. In terms of biological role, tetrapolymerization of the monopyrrole PBG into the hydroxymethylbilane pre-uroporphyrinogen in several discrete steps. The sequence is that of Porphobilinogen deaminase from Sorangium cellulosum (strain So ce56) (Polyangium cellulosum (strain So ce56)).